The following is a 348-amino-acid chain: RNA 3'-terminal phosphate cyclase (348 aa).

ATP is bound by residues Gln-107 and 290-294; that span reads HLADQ. His-316 acts as the Tele-AMP-histidine intermediate in catalysis.

Belongs to the RNA 3'-terminal cyclase family. Type 1 subfamily.

The protein resides in the cytoplasm. The enzyme catalyses a 3'-end 3'-phospho-ribonucleotide-RNA + ATP = a 3'-end 2',3'-cyclophospho-ribonucleotide-RNA + AMP + diphosphate. In terms of biological role, catalyzes the conversion of 3'-phosphate to a 2',3'-cyclic phosphodiester at the end of RNA. The mechanism of action of the enzyme occurs in 3 steps: (A) adenylation of the enzyme by ATP; (B) transfer of adenylate to an RNA-N3'P to produce RNA-N3'PP5'A; (C) and attack of the adjacent 2'-hydroxyl on the 3'-phosphorus in the diester linkage to produce the cyclic end product. The biological role of this enzyme is unknown but it is likely to function in some aspects of cellular RNA processing. This is RNA 3'-terminal phosphate cyclase (rtcA) from Nostoc sp. (strain PCC 7120 / SAG 25.82 / UTEX 2576).